The following is a 468-amino-acid chain: Probable 1,4-beta-D-glucan cellobiohydrolase C (468 aa).

Residues 1–18 (MGRVSSLALALLLPAVQA) form the signal peptide. The 36-residue stretch at 19–54 (QQTLWGQCGGIGWTGPTNCVAGAACSTQNPYYAQCL) folds into the CBM1 domain. 2 disulfides stabilise this stretch: Cys26-Cys43 and Cys37-Cys53. A thr-rich linker region spans residues 57-106 (TATTSTTLTTTTRVTTTTTSTTSKSSSTGSTTTTKSTGTTTTSGSSTTIT). The disordered stretch occupies residues 68 to 107 (TRVTTTTTSTTSKSSSTGSTTTTKSTGTTTTSGSSTTITS). The interval 107 to 468 (SAPSGNPFSG…QLLKNANPAF (362 aa)) is catalytic. Asp198 is a catalytic residue. Cystine bridges form between Cys199/Cys258 and Cys390/Cys437. The active-site Proton donor is the Asp244. The active-site Nucleophile is Asp423.

It belongs to the glycosyl hydrolase 6 (cellulase B) family.

It localises to the secreted. It carries out the reaction Hydrolysis of (1-&gt;4)-beta-D-glucosidic linkages in cellulose and cellotetraose, releasing cellobiose from the non-reducing ends of the chains.. The biological conversion of cellulose to glucose generally requires three types of hydrolytic enzymes: (1) Endoglucanases which cut internal beta-1,4-glucosidic bonds; (2) Exocellobiohydrolases that cut the disaccharide cellobiose from the non-reducing end of the cellulose polymer chain; (3) Beta-1,4-glucosidases which hydrolyze the cellobiose and other short cello-oligosaccharides to glucose. The chain is Probable 1,4-beta-D-glucan cellobiohydrolase C (cbhC) from Aspergillus terreus (strain NIH 2624 / FGSC A1156).